The primary structure comprises 309 residues: Mas-related G-protein coupled receptor member E (309 aa).

Topologically, residues 1-21 (MSLRVHTHSPSTQGDMAFNLT) are extracellular. Asparagine 19 carries N-linked (GlcNAc...) asparagine glycosylation. A helical membrane pass occupies residues 22-42 (ILSLTELLSLGGLLGNGVALW). Residues 43–59 (LLNQNVYRNPFSIYLLD) lie on the Cytoplasmic side of the membrane. The helical transmembrane segment at 60–80 (VACADLIFLCCHMVAIIPELL) threads the bilayer. Over 81–91 (QDQLNFPEFVH) the chain is Extracellular. A helical membrane pass occupies residues 92–112 (ISLIMLRFFCYIVGLSLLVAI). Topologically, residues 113–132 (STEQCLATLFPSGYLCRRPR) are cytoplasmic. The helical transmembrane segment at 133-153 (YLTTCVCAFIWVLCLLLDLLL) threads the bilayer. Over 154 to 168 (SGACTQFFGAPSYHL) the chain is Extracellular. A helical membrane pass occupies residues 169–189 (CGMLWLVVAVLLAALCCTMCV). At 190 to 212 (TSLLLLLRVERGPERHQPRGFPT) the chain is on the cytoplasmic side. Residues 213–233 (LVLLVILLFLFCGLPFGIFWL) form a helical membrane-spanning segment. Over 234 to 247 (SKNLSWHTPLYFYH) the chain is Extracellular. Asparagine 236 carries an N-linked (GlcNAc...) asparagine glycan. The chain crosses the membrane as a helical span at residues 248–268 (FSFFMASVHSAAKPAIYFFLG). Topologically, residues 269–309 (STPGQRFQEPLRLVLQRALGDEAELGAVREASQGGLVDMTV) are cytoplasmic.

The protein belongs to the G-protein coupled receptor 1 family. Mas subfamily.

Its subcellular location is the cell membrane. In terms of biological role, orphan receptor. May regulate nociceptor function and/or development, including the sensation or modulation of pain. The protein is Mas-related G-protein coupled receptor member E (Mrgpre) of Rattus norvegicus (Rat).